We begin with the raw amino-acid sequence, 711 residues long: DNA topoisomerase 3 (711 aa).

Residues 2–135 (KSLILAEKPS…IKRLWISSVT (134 aa)) enclose the Toprim domain. 2 residues coordinate Mg(2+): Glu8 and Asp104. The Topo IA-type catalytic domain maps to 152–580 (FQHLYEAALA…EMKAFTQSIV (429 aa)). The interval 186 to 191 (SLGRVQ) is interaction with DNA. Tyr305 (O-(5'-phospho-DNA)-tyrosine intermediate) is an active-site residue. A disordered region spans residues 672–699 (KRFKNKSSGKVSKKEMKKYMNNEDSLEN). A compositionally biased stretch (basic and acidic residues) spans 683–692 (SKKEMKKYMN).

This sequence belongs to the type IA topoisomerase family. Mg(2+) is required as a cofactor.

The catalysed reaction is ATP-independent breakage of single-stranded DNA, followed by passage and rejoining.. Releases the supercoiling and torsional tension of DNA, which is introduced during the DNA replication and transcription, by transiently cleaving and rejoining one strand of the DNA duplex. Introduces a single-strand break via transesterification at a target site in duplex DNA. The scissile phosphodiester is attacked by the catalytic tyrosine of the enzyme, resulting in the formation of a DNA-(5'-phosphotyrosyl)-enzyme intermediate and the expulsion of a 3'-OH DNA strand. The free DNA strand then undergoes passage around the unbroken strand, thus removing DNA supercoils. Finally, in the religation step, the DNA 3'-OH attacks the covalent intermediate to expel the active-site tyrosine and restore the DNA phosphodiester backbone. The sequence is that of DNA topoisomerase 3 from Staphylococcus haemolyticus (strain JCSC1435).